The sequence spans 364 residues: Palmitoyltransferase ZDHHC9 (364 aa).

The Cytoplasmic portion of the chain corresponds to 1 to 35 (MSVMVVRKKVTRKWEKLPGRNTFCCDGRVMMARQK). The helical transmembrane segment at 36-56 (GIFYLTLFLILGTCTLFFAFE) threads the bilayer. Over 57–63 (CRYLAVQ) the chain is Lumenal. The helical transmembrane segment at 64–84 (LSPAIPVFAAMLFLFSMATLL) threads the bilayer. Residues 85–183 (RTSFSDPGVI…NCVGKRNYRY (99 aa)) lie on the Cytoplasmic side of the membrane. A DHHC domain is found at 139–189 (KYCYTCKIFRPPRASHCSICDNCVERFDHHCPWVGNCVGKRNYRYFYLFIL). The S-palmitoyl cysteine intermediate role is filled by cysteine 169. The helical transmembrane segment at 184–204 (FYLFILSLSLLTIYVFAFNIV) threads the bilayer. Over 205 to 228 (YVALKSLKIGFLETLKETPGTVLE) the chain is Lumenal. Residues 229-249 (VLICFFTLWSVVGLTGFHTFL) traverse the membrane as a helical segment. The Cytoplasmic segment spans residues 250–364 (VALNQTTNED…PPQEAAEAEK (115 aa)). The segment at 303–364 (PLEESGSRPP…PPQEAAEAEK (62 aa)) is disordered. Polar residues predominate over residues 310-323 (RPPSTQETSSSLLP). Residues 346-356 (EMPPPEPPEPP) show a composition bias toward pro residues.

This sequence belongs to the DHHC palmitoyltransferase family. ERF2/ZDHHC9 subfamily. Interacts with GOLGA7. Highly expressed in kidney, skeletal muscle, brain, lung and liver. Absent in thymus, spleen and leukocytes.

The protein localises to the endoplasmic reticulum membrane. Its subcellular location is the golgi apparatus membrane. It catalyses the reaction L-cysteinyl-[protein] + hexadecanoyl-CoA = S-hexadecanoyl-L-cysteinyl-[protein] + CoA. Functionally, palmitoyltransferase that catalyzes the addition of palmitate onto various protein substrates, such as ADRB2, GSDMD, HRAS, NRAS and CGAS. The ZDHHC9-GOLGA7 complex is a palmitoyltransferase specific for HRAS and NRAS. May have a palmitoyltransferase activity toward the beta-2 adrenergic receptor/ADRB2 and therefore regulate G protein-coupled receptor signaling. Acts as a regulator of innate immunity by catalyzing palmitoylation of CGAS, thereby promoting CGAS homodimerization and cyclic GMP-AMP synthase activity. Activates pyroptosis by catalyzing palmitoylation of gasdermin-D (GSDMD), thereby promoting membrane translocation and pore formation of GSDMD. Its function is as follows. (Microbial infection) Through a sequential action with ZDHHC20, rapidly and efficiently palmitoylates SARS coronavirus-2/SARS-CoV-2 spike protein following its synthesis in the endoplasmic reticulum (ER). In the infected cell, promotes spike biogenesis by protecting it from premature ER degradation, increases half-life and controls the lipid organization of its immediate membrane environment. Once the virus has formed, spike palmitoylation controls fusion with the target cell. The chain is Palmitoyltransferase ZDHHC9 from Homo sapiens (Human).